Reading from the N-terminus, the 541-residue chain is Phosphatidylethanolamine transferase Mcr-1 (541 aa).

Residues 1–14 (MMQHTSVWYRRSVS) lie on the Cytoplasmic side of the membrane. A helical membrane pass occupies residues 15-35 (PFVLVASVAVFLTATANLTFF). The Periplasmic segment spans residues 36–47 (DKISQTYPIADN). A helical membrane pass occupies residues 48 to 68 (LGFVLTIAVVLFGAMLLITTL). The Cytoplasmic segment spans residues 69 to 73 (LSSYR). The chain crosses the membrane as a helical span at residues 74-94 (YVLKPVLILLLIMGAVTSYFT). The Periplasmic portion of the chain corresponds to 95-122 (DTYGTVYDTTMLQNALQTDQAETKDLLN). Residues 123-143 (AAFIMRIIGLGVLPSLLVAFV) traverse the membrane as a helical segment. Over 144-157 (KVDYPTWGKGLMRR) the chain is Cytoplasmic. Residues 158–178 (LGLIVASLALILLPVVAFSSH) form a helical membrane-spanning segment. Residues 179 to 541 (YASFFRVHKP…KVKDRTAFIR (363 aa)) lie on the Periplasmic side of the membrane. The Zn(2+) site is built by E246 and T285. Cystine bridges form between C281-C291, C356-C364, and C414-C422. T285 carries the post-translational modification Phosphothreonine. D465 and H466 together coordinate Zn(2+).

Belongs to the phosphoethanolamine transferase family. In terms of assembly, monomer. In terms of processing, phosphorylated at Thr-285; may represent an intermediate in the catalytic mechanism.

The protein resides in the cell inner membrane. The catalysed reaction is lipid A (E. coli) + a 1,2-diacyl-sn-glycero-3-phosphoethanolamine + H(+) = lipid A 4'-(2-aminoethyl diphosphate) (E. coli) + a 1,2-diacyl-sn-glycerol. EDTA may inhibit activity. May be inhibited by ethanolamine. In terms of biological role, probably catalyzes the addition of a phosphoethanolamine moiety to lipid A. Phosphoethanolamine modification of lipid A confers polymyxin resistance. Confers resistance to polymyxin-type antibiotics such as colistin; in the E.coli strain W3110. The chain is Phosphatidylethanolamine transferase Mcr-1 (mcr1) from Escherichia coli.